We begin with the raw amino-acid sequence, 120 residues long: Non-specific lipid-transfer protein 6 (120 aa).

Residues 1–26 form the signal peptide; the sequence is MARSMSLKLACVVVLCLLVDAPLAQG. Cystine bridges form between Cys57–Cys102 and Cys77–Cys116.

This sequence belongs to the plant LTP family. As to expression, specifically expressed in fiber cells.

In terms of biological role, plant non-specific lipid-transfer proteins transfer phospholipids as well as galactolipids across membranes. May play a role in wax or cutin deposition in the cell walls of expanding epidermal cells and certain secretory tissues. This chain is Non-specific lipid-transfer protein 6 (LTP6), found in Gossypium hirsutum (Upland cotton).